A 94-amino-acid chain; its full sequence is uncharacterized protein (94 aa).

This is an uncharacterized protein from Archaeoglobus fulgidus (strain ATCC 49558 / DSM 4304 / JCM 9628 / NBRC 100126 / VC-16).